Here is a 74-residue protein sequence, read N- to C-terminus: uncharacterized protein (74 aa).

This is an uncharacterized protein from Schizosaccharomyces pombe (strain 972 / ATCC 24843) (Fission yeast).